The sequence spans 201 residues: Putative 3-methyladenine DNA glycosylase (201 aa).

It belongs to the DNA glycosylase MPG family.

The chain is Putative 3-methyladenine DNA glycosylase from Clostridium novyi (strain NT).